The sequence spans 189 residues: Peptidyl-tRNA hydrolase (189 aa).

Tyr14 is a tRNA binding site. The Proton acceptor role is filled by His19. Positions 64, 66, and 112 each coordinate tRNA.

The protein belongs to the PTH family. As to quaternary structure, monomer.

It localises to the cytoplasm. The catalysed reaction is an N-acyl-L-alpha-aminoacyl-tRNA + H2O = an N-acyl-L-amino acid + a tRNA + H(+). Functionally, hydrolyzes ribosome-free peptidyl-tRNAs (with 1 or more amino acids incorporated), which drop off the ribosome during protein synthesis, or as a result of ribosome stalling. Catalyzes the release of premature peptidyl moieties from peptidyl-tRNA molecules trapped in stalled 50S ribosomal subunits, and thus maintains levels of free tRNAs and 50S ribosomes. The protein is Peptidyl-tRNA hydrolase of Clostridium botulinum (strain Okra / Type B1).